Consider the following 334-residue polypeptide: Glyceraldehyde-3-phosphate dehydrogenase 2 (334 aa).

NAD(+) contacts are provided by residues 12–13 (RI), Asp35, and Arg79. D-glyceraldehyde 3-phosphate contacts are provided by residues 152–154 (SCT), Thr183, Arg198, 211–212 (SG), and Arg234. Cys153 acts as the Nucleophile in catalysis. Asn315 serves as a coordination point for NAD(+).

Belongs to the glyceraldehyde-3-phosphate dehydrogenase family. Homotetramer.

It localises to the cytoplasm. It catalyses the reaction D-glyceraldehyde 3-phosphate + phosphate + NAD(+) = (2R)-3-phospho-glyceroyl phosphate + NADH + H(+). It functions in the pathway carbohydrate degradation; glycolysis; pyruvate from D-glyceraldehyde 3-phosphate: step 1/5. Its activity is regulated as follows. Inhibited by pentalenolactone (PL). Functionally, catalyzes the oxidative phosphorylation of glyceraldehyde 3-phosphate (G3P) to 1,3-bisphosphoglycerate (BPG) using the cofactor NAD. The first reaction step involves the formation of a hemiacetal intermediate between G3P and a cysteine residue, and this hemiacetal intermediate is then oxidized to a thioester, with concomitant reduction of NAD to NADH. The reduced NADH is then exchanged with the second NAD, and the thioester is attacked by a nucleophilic inorganic phosphate to produce BPG. The chain is Glyceraldehyde-3-phosphate dehydrogenase 2 (gap2) from Streptomyces arenae.